The following is a 340-amino-acid chain: ATPase GET3 (340 aa).

Residue 35-42 coordinates ATP; sequence KGGVGKTT. Asp64 is an active-site residue. Positions 245 and 272 each coordinate ATP. The Zn(2+) site is built by Cys283 and Cys286.

It belongs to the arsA ATPase family. As to quaternary structure, homodimer.

It localises to the cytoplasm. It is found in the endoplasmic reticulum. Functionally, ATPase required for the post-translational delivery of tail-anchored (TA) proteins to the endoplasmic reticulum. Recognizes and selectively binds the transmembrane domain of TA proteins in the cytosol. This complex then targets to the endoplasmic reticulum by membrane-bound receptors, where the tail-anchored protein is released for insertion. This process is regulated by ATP binding and hydrolysis. ATP binding drives the homodimer towards the closed dimer state, facilitating recognition of newly synthesized TA membrane proteins. ATP hydrolysis is required for insertion. Subsequently, the homodimer reverts towards the open dimer state, lowering its affinity for the membrane-bound receptor, and returning it to the cytosol to initiate a new round of targeting. The chain is ATPase GET3 from Chaetomium globosum (strain ATCC 6205 / CBS 148.51 / DSM 1962 / NBRC 6347 / NRRL 1970) (Soil fungus).